The sequence spans 126 residues: Small ribosomal subunit protein uS13 (126 aa).

The segment at 91-126 (RHRRGLPVRGQRTSTNARTRKGPRRAIAGKKKPGKK) is disordered. Over residues 108–126 (RTRKGPRRAIAGKKKPGKK) the composition is skewed to basic residues.

Belongs to the universal ribosomal protein uS13 family. As to quaternary structure, part of the 30S ribosomal subunit. Forms a loose heterodimer with protein S19. Forms two bridges to the 50S subunit in the 70S ribosome.

Its function is as follows. Located at the top of the head of the 30S subunit, it contacts several helices of the 16S rRNA. In the 70S ribosome it contacts the 23S rRNA (bridge B1a) and protein L5 of the 50S subunit (bridge B1b), connecting the 2 subunits; these bridges are implicated in subunit movement. Contacts the tRNAs in the A and P-sites. This Streptomyces coelicolor (strain ATCC BAA-471 / A3(2) / M145) protein is Small ribosomal subunit protein uS13.